The chain runs to 66 residues: ATP synthase F(0) complex subunit 8 (66 aa).

A helical transmembrane segment spans residues threonine 8–phenylalanine 24. N6-acetyllysine; alternate is present on lysine 54. Lysine 54 is modified (N6-succinyllysine; alternate). Lysine 57 carries the N6-acetyllysine modification.

Belongs to the ATPase protein 8 family. As to quaternary structure, component of the ATP synthase complex composed at least of ATP5F1A/subunit alpha, ATP5F1B/subunit beta, ATP5MC1/subunit c (homooctomer), MT-ATP6/subunit a, MT-ATP8/subunit 8, ATP5ME/subunit e, ATP5MF/subunit f, ATP5MG/subunit g, ATP5MK/subunit k, ATP5MJ/subunit j, ATP5F1C/subunit gamma, ATP5F1D/subunit delta, ATP5F1E/subunit epsilon, ATP5PF/subunit F6, ATP5PB/subunit b, ATP5PD/subunit d, ATP5PO/subunit OSCP. ATP synthase complex consists of a soluble F(1) head domain (subunits alpha(3) and beta(3)) - the catalytic core - and a membrane F(0) domain - the membrane proton channel (subunits c, a, 8, e, f, g, k and j). These two domains are linked by a central stalk (subunits gamma, delta, and epsilon) rotating inside the F1 region and a stationary peripheral stalk (subunits F6, b, d, and OSCP). Interacts with PRICKLE3.

Its subcellular location is the mitochondrion membrane. In terms of biological role, subunit 8, of the mitochondrial membrane ATP synthase complex (F(1)F(0) ATP synthase or Complex V) that produces ATP from ADP in the presence of a proton gradient across the membrane which is generated by electron transport complexes of the respiratory chain. ATP synthase complex consist of a soluble F(1) head domain - the catalytic core - and a membrane F(1) domain - the membrane proton channel. These two domains are linked by a central stalk rotating inside the F(1) region and a stationary peripheral stalk. During catalysis, ATP synthesis in the catalytic domain of F(1) is coupled via a rotary mechanism of the central stalk subunits to proton translocation. In vivo, can only synthesize ATP although its ATP hydrolase activity can be activated artificially in vitro. Part of the complex F(0) domain. This Ovis aries (Sheep) protein is ATP synthase F(0) complex subunit 8.